Consider the following 357-residue polypeptide: Guanine nucleotide-binding protein alpha-2 subunit (357 aa).

The N-myristoyl glycine moiety is linked to residue glycine 2. Cysteine 4 is lipidated: S-palmitoyl cysteine. The G-alpha domain occupies 30 to 356 (NEVKLLLLGA…TQCVMKAGLY (327 aa)). The interval 33 to 46 (KLLLLGAGESGKST) is G1 motif. Positions 41, 42, 43, 44, 45, and 46 each coordinate GTP. Serine 45 is a binding site for Mg(2+). Serine 113 carries the phosphoserine modification. Positions 154, 179, 185, 207, 272, 273, 275, and 328 each coordinate GTP. The interval 177-185 (DILHTRVMT) is G2 motif. Residue threonine 185 coordinates Mg(2+). The G3 motif stretch occupies residues 200–209 (FRLVDVGGQR). The tract at residues 268–275 (ILFLNKSD) is G4 motif. Residues 326–331 (TCATDT) form a G5 motif region.

The protein belongs to the G-alpha family. In terms of assembly, g proteins are composed of 3 units; alpha, beta and gamma. The alpha chain contains the guanine nucleotide binding site. Interacts with the RAP guanine nucleotide exchange factor glfB. It depends on Mg(2+) as a cofactor. Ser-113 is transiently phosphorylated following stimulation with extracellular cAMP.

Guanine nucleotide-binding proteins (G proteins) are involved as modulators or transducers in various transmembrane signaling systems. G alpha-2 is required for the early aggregation process and most of the known cAMP receptor-mediated responses. Interacts with downstream effector gflB, a Rap guanine nucleotide exchange factor, to regulate the balance between Ras and Rap signaling at the leading edge of chemotaxing cells. The protein is Guanine nucleotide-binding protein alpha-2 subunit (gpaB) of Dictyostelium discoideum (Social amoeba).